Consider the following 759-residue polypeptide: Protein YdeP (759 aa).

The [4Fe-4S] cluster site is built by C49 and C52.

The protein belongs to the prokaryotic molybdopterin-containing oxidoreductase family. It depends on [4Fe-4S] cluster as a cofactor. Mo-bis(molybdopterin guanine dinucleotide) is required as a cofactor.

Its function is as follows. Probably involved in acid resistance. The sequence is that of Protein YdeP (ydeP) from Escherichia coli (strain K12).